We begin with the raw amino-acid sequence, 512 residues long: Protein SHC1 (512 aa).

A compositionally biased stretch (acidic residues) spans 101 to 113 (EQDEFENDVEDDA). Disordered stretches follow at residues 101 to 122 (EQDE…EKSQ) and 144 to 164 (DGNS…ESVA). Sel1-like repeat units lie at residues 318 to 353 (PDAQ…KRMH), 354 to 389 (IESV…TKNH), 390 to 429 (PAAM…SMAS), and 433 to 470 (CGAP…ALGH).

Belongs to the SKT5 family.

It localises to the cytoplasm. The protein localises to the cytoplasmic granule membrane. In terms of biological role, required for the activation of chitin synthase III (CHS3) activity during the sporulation process. In Saccharomyces cerevisiae (strain ATCC 204508 / S288c) (Baker's yeast), this protein is Protein SHC1 (SHC1).